Here is a 373-residue protein sequence, read N- to C-terminus: SUN domain-containing protein 5 (373 aa).

Topologically, residues 1–103 are nuclear; it reads MPRTRNIGAL…LFCQKVMEKM (103 aa). Residues 104–120 form a helical membrane-spanning segment; it reads GLLVLCVFGFWMFSMHL. The Perinuclear space segment spans residues 121–373; sequence PSKVEVWQDD…PKDSHLEPLS (253 aa). Residues 136–180 are a coiled coil; the sequence is LQSLRMYQEKVRHHTGEIQDLRGSMNQLIAKLQKMEAISDEQKMA. An SUN domain is found at 204-362; sequence ASIDFEHTSA…YRVRVHGSVT (159 aa).

Probable homotrimer. Interacts with DNAJB13. Post-translationally, highly glycosylated in the Golgi apparatus during spermiogenesis. Testis-specific, abundantly expressed in spermatocytes and round spermatids.

It is found in the nucleus inner membrane. The protein resides in the golgi apparatus. Plays an essential role in anchoring sperm head to the tail. Is responsible for the attachment of the coupling apparatus to the sperm nuclear envelope. This chain is SUN domain-containing protein 5 (Sun5), found in Mus musculus (Mouse).